Here is a 20-residue protein sequence, read N- to C-terminus: Toxin CpTx-4a (20 aa).

Belongs to the spider toxin CSTX family. In terms of tissue distribution, expressed by the venom gland.

The protein resides in the secreted. Functionally, spider venom toxin that exhibits cytolytic activity by forming an alpha-helix across the membrane. Lethal to insect larvae. The protein is Toxin CpTx-4a of Cheiracanthium punctorium (Yellow sac spider).